Consider the following 783-residue polypeptide: Endonuclease MutS2 (783 aa).

328 to 335 serves as a coordination point for ATP; the sequence is GPNTGGKT. Residues 708 to 783 form the Smr domain; that stretch reads LDLRGKRYEE…GSGCTIATLG (76 aa).

Belongs to the DNA mismatch repair MutS family. MutS2 subfamily. Homodimer. Binds to stalled ribosomes, contacting rRNA.

In terms of biological role, endonuclease that is involved in the suppression of homologous recombination and thus may have a key role in the control of bacterial genetic diversity. Functionally, acts as a ribosome collision sensor, splitting the ribosome into its 2 subunits. Detects stalled/collided 70S ribosomes which it binds and splits by an ATP-hydrolysis driven conformational change. Acts upstream of the ribosome quality control system (RQC), a ribosome-associated complex that mediates the extraction of incompletely synthesized nascent chains from stalled ribosomes and their subsequent degradation. Probably generates substrates for RQC. This Streptococcus thermophilus (strain ATCC BAA-491 / LMD-9) protein is Endonuclease MutS2.